A 185-amino-acid chain; its full sequence is Kappa-casein (185 aa).

Residues 1 to 20 (MKSFFLVVNILALTLPFLGA) form the signal peptide. Residue Thr143 is glycosylated (O-linked (GalNAc...) threonine). Ser161 is subject to Phosphoserine; alternate. Residue Ser161 is glycosylated (O-linked (GalNAc...) serine; alternate). A glycan (O-linked (GalNAc...) threonine) is linked at Thr178. Phosphoserine is present on Ser179.

This sequence belongs to the kappa-casein family. Mammary gland specific. Secreted in milk.

Its subcellular location is the secreted. Its function is as follows. Kappa-casein stabilizes micelle formation, preventing casein precipitation in milk. In Equus caballus (Horse), this protein is Kappa-casein (CSN3).